We begin with the raw amino-acid sequence, 475 residues long: Ribulose bisphosphate carboxylase large chain (475 aa).

2 residues coordinate substrate: N123 and T173. K175 acts as the Proton acceptor in catalysis. K177 contacts substrate. K201, D203, and E204 together coordinate Mg(2+). The residue at position 201 (K201) is an N6-carboxylysine. Catalysis depends on H294, which acts as the Proton acceptor. Substrate-binding residues include R295, H327, and S379.

This sequence belongs to the RuBisCO large chain family. Type I subfamily. As to quaternary structure, heterohexadecamer of 8 large chains and 8 small chains; disulfide-linked. The disulfide link is formed within the large subunit homodimers. Interacts with assembly factor Raf1 which helps form the holoenzyme, most interaction (and folding) occurs in the cytoplasm. Mg(2+) is required as a cofactor. In terms of processing, the disulfide bond which can form in the large chain dimeric partners within the hexadecamer appears to be associated with oxidative stress and protein turnover.

The protein localises to the carboxysome. The protein resides in the cytoplasm. It catalyses the reaction 2 (2R)-3-phosphoglycerate + 2 H(+) = D-ribulose 1,5-bisphosphate + CO2 + H2O. The catalysed reaction is D-ribulose 1,5-bisphosphate + O2 = 2-phosphoglycolate + (2R)-3-phosphoglycerate + 2 H(+). Its function is as follows. RuBisCO catalyzes two reactions: the carboxylation of D-ribulose 1,5-bisphosphate, the primary event in carbon dioxide fixation, as well as the oxidative fragmentation of the pentose substrate in the photorespiration process. Both reactions occur simultaneously and in competition at the same active site. The protein is Ribulose bisphosphate carboxylase large chain of Thermosynechococcus vestitus (strain NIES-2133 / IAM M-273 / BP-1).